The chain runs to 208 residues: Large ribosomal subunit protein uL4 (208 aa).

Residues 45-89 (RQGTHAHKNRSAVSGGGKKPWRQKGTGRARQGSTRSPQWRGGGTV) form a disordered region.

This sequence belongs to the universal ribosomal protein uL4 family. As to quaternary structure, part of the 50S ribosomal subunit.

Functionally, one of the primary rRNA binding proteins, this protein initially binds near the 5'-end of the 23S rRNA. It is important during the early stages of 50S assembly. It makes multiple contacts with different domains of the 23S rRNA in the assembled 50S subunit and ribosome. Forms part of the polypeptide exit tunnel. The polypeptide is Large ribosomal subunit protein uL4 (Lactococcus lactis subsp. cremoris (strain SK11)).